A 179-amino-acid chain; its full sequence is Large ribosomal subunit protein uL6 (179 aa).

This sequence belongs to the universal ribosomal protein uL6 family. Part of the 50S ribosomal subunit.

In terms of biological role, this protein binds to the 23S rRNA, and is important in its secondary structure. It is located near the subunit interface in the base of the L7/L12 stalk, and near the tRNA binding site of the peptidyltransferase center. In Synechococcus sp. (strain RCC307), this protein is Large ribosomal subunit protein uL6.